Here is a 197-residue protein sequence, read N- to C-terminus: Holliday junction branch migration complex subunit RuvA (197 aa).

Positions 1–63 (MISSLRGEVL…EDSMTLYGFV (63 aa)) are domain I. The interval 64–139 (DGETRDLFLT…KVGPAGSAAT (76 aa)) is domain II. The tract at residues 139 to 143 (TAPAV) is flexible linker. The tract at residues 144-197 (NGHTVRAPVVEALVGLGFAAKQAEEATDKVLAGDGEATTSSALRAALSLLGKAR) is domain III.

The protein belongs to the RuvA family. As to quaternary structure, homotetramer. Forms an RuvA(8)-RuvB(12)-Holliday junction (HJ) complex. HJ DNA is sandwiched between 2 RuvA tetramers; dsDNA enters through RuvA and exits via RuvB. An RuvB hexamer assembles on each DNA strand where it exits the tetramer. Each RuvB hexamer is contacted by two RuvA subunits (via domain III) on 2 adjacent RuvB subunits; this complex drives branch migration. In the full resolvosome a probable DNA-RuvA(4)-RuvB(12)-RuvC(2) complex forms which resolves the HJ.

It localises to the cytoplasm. In terms of biological role, the RuvA-RuvB-RuvC complex processes Holliday junction (HJ) DNA during genetic recombination and DNA repair, while the RuvA-RuvB complex plays an important role in the rescue of blocked DNA replication forks via replication fork reversal (RFR). RuvA specifically binds to HJ cruciform DNA, conferring on it an open structure. The RuvB hexamer acts as an ATP-dependent pump, pulling dsDNA into and through the RuvAB complex. HJ branch migration allows RuvC to scan DNA until it finds its consensus sequence, where it cleaves and resolves the cruciform DNA. This chain is Holliday junction branch migration complex subunit RuvA, found in Mycobacterium marinum (strain ATCC BAA-535 / M).